Consider the following 74-residue polypeptide: Large ribosomal subunit protein bL27c (74 aa).

It belongs to the bacterial ribosomal protein bL27 family.

It is found in the plastid. The protein resides in the chloroplast. This is Large ribosomal subunit protein bL27c (rpl27) from Pleurochrysis haptonemofera (Unicellular marine alga).